The primary structure comprises 349 residues: Hydroxymethylglutaryl-CoA synthase (349 aa).

(3S)-3-hydroxy-3-methylglutaryl-CoA-binding residues include aspartate 30 and alanine 31. Glutamate 82 functions as the Proton donor/acceptor in the catalytic mechanism. Residues cysteine 114 and threonine 155 each coordinate (3S)-3-hydroxy-3-methylglutaryl-CoA. The Acyl-thioester intermediate role is filled by cysteine 114. Arginine 203 lines the CoA pocket. Residues threonine 205 and histidine 238 each contribute to the (3S)-3-hydroxy-3-methylglutaryl-CoA site. Catalysis depends on histidine 238, which acts as the Proton donor/acceptor. Residue lysine 243 coordinates CoA. The (3S)-3-hydroxy-3-methylglutaryl-CoA site is built by asparagine 270 and serine 300.

It belongs to the thiolase-like superfamily. Archaeal HMG-CoA synthase family. Interacts with acetoacetyl-CoA thiolase that catalyzes the precedent step in the pathway and with a DUF35 protein. The acetoacetyl-CoA thiolase/HMG-CoA synthase complex channels the intermediate via a fused CoA-binding site, which allows for efficient coupling of the endergonic thiolase reaction with the exergonic HMGCS reaction.

The catalysed reaction is acetoacetyl-CoA + acetyl-CoA + H2O = (3S)-3-hydroxy-3-methylglutaryl-CoA + CoA + H(+). It participates in metabolic intermediate biosynthesis; (R)-mevalonate biosynthesis; (R)-mevalonate from acetyl-CoA: step 2/3. Catalyzes the condensation of acetyl-CoA with acetoacetyl-CoA to form 3-hydroxy-3-methylglutaryl-CoA (HMG-CoA). Functions in the mevalonate (MVA) pathway leading to isopentenyl diphosphate (IPP), a key precursor for the biosynthesis of isoprenoid compounds that are building blocks of archaeal membrane lipids. In Methanococcus maripaludis (strain DSM 14266 / JCM 13030 / NBRC 101832 / S2 / LL), this protein is Hydroxymethylglutaryl-CoA synthase.